The following is a 207-amino-acid chain: Large ribosomal subunit protein uL4 (207 aa).

Residues 43-85 (SRRQGTHDTKGRSEVRGGGRKPWKQKGTGRARQGSIRSPQWVG) form a disordered region. Residues 47-59 (GTHDTKGRSEVRG) show a composition bias toward basic and acidic residues. Positions 60–71 (GGRKPWKQKGTG) are enriched in basic residues.

This sequence belongs to the universal ribosomal protein uL4 family. As to quaternary structure, part of the 50S ribosomal subunit.

Its function is as follows. One of the primary rRNA binding proteins, this protein initially binds near the 5'-end of the 23S rRNA. It is important during the early stages of 50S assembly. It makes multiple contacts with different domains of the 23S rRNA in the assembled 50S subunit and ribosome. In terms of biological role, forms part of the polypeptide exit tunnel. This Exiguobacterium sibiricum (strain DSM 17290 / CCUG 55495 / CIP 109462 / JCM 13490 / 255-15) protein is Large ribosomal subunit protein uL4.